Here is a 213-residue protein sequence, read N- to C-terminus: mRNA-decapping protein OPG121 (213 aa).

Residues glutamate 16 and arginine 50 each contribute to the N(7)-methyl-GTP site. Residues 30-209 enclose the Nudix hydrolase domain; it reads KDTHVFAACI…EYLSYIYNIL (180 aa). The Nudix box signature appears at 111 to 132; sequence GKLDKKESIKDCLRRELKEESD. Residues glutamate 126 and glutamate 130 each coordinate Mg(2+). Aspartate 151 is a N(7)-methyl-GTP binding site. A Mg(2+)-binding site is contributed by glutamate 183.

This sequence belongs to the Nudix hydrolase family. In terms of assembly, interacts with the late transcription elongation factor VLTF-4/OPG110. Interacts with the late transcription factors VLTF-1. Mg(2+) is required as a cofactor. The cofactor is Mn(2+).

The enzyme catalyses a 5'-end (N(7)-methyl 5'-triphosphoguanosine)-guanosine in mRNA + H2O = a 5'-end phospho-guanosine in mRNA + N(7)-methyl-GDP + 2 H(+). Its function is as follows. Acts with RNA polymerase to initiate transcription from late gene promoters. The protein is mRNA-decapping protein OPG121 (OPG121) of Cynomys gunnisoni (Gunnison's prairie dog).